The sequence spans 311 residues: Methionyl-tRNA formyltransferase (311 aa).

Position 109–112 (109–112) interacts with (6S)-5,6,7,8-tetrahydrofolate; it reads SLLP.

It belongs to the Fmt family.

The catalysed reaction is L-methionyl-tRNA(fMet) + (6R)-10-formyltetrahydrofolate = N-formyl-L-methionyl-tRNA(fMet) + (6S)-5,6,7,8-tetrahydrofolate + H(+). Attaches a formyl group to the free amino group of methionyl-tRNA(fMet). The formyl group appears to play a dual role in the initiator identity of N-formylmethionyl-tRNA by promoting its recognition by IF2 and preventing the misappropriation of this tRNA by the elongation apparatus. This chain is Methionyl-tRNA formyltransferase, found in Marinobacter nauticus (strain ATCC 700491 / DSM 11845 / VT8) (Marinobacter aquaeolei).